The chain runs to 88 residues: uncharacterized protein (88 aa).

This is an uncharacterized protein from Escherichia coli O157:H7.